Here is a 570-residue protein sequence, read N- to C-terminus: Berberine bridge enzyme-like 19 (570 aa).

The N-terminal stretch at 1–30 is a signal peptide; the sequence is MLTTPPRTFVSVPFFFFFLLFLSLPLSSFS. Cys42 and Cys105 form a disulfide bridge. Asn80 is a glycosylation site (N-linked (GlcNAc...) asparagine). Positions 83 to 257 constitute an FAD-binding PCMH-type domain; it reads STLKPTIIIT…LGYKVKLVPV (175 aa). A cross-link (6-(S-cysteinyl)-8alpha-(pros-histidyl)-FAD (His-Cys)) is located at residues 120-182; it reads HDYDGLSYIS…RVHGFPAGVC (63 aa). N-linked (GlcNAc...) asparagine glycans are attached at residues Asn341 and Asn359.

It belongs to the oxygen-dependent FAD-linked oxidoreductase family. Requires FAD as cofactor. In terms of processing, the FAD cofactor is bound via a bicovalent 6-S-cysteinyl, 8alpha-N1-histidyl FAD linkage.

Its subcellular location is the secreted. It is found in the cell wall. In Arabidopsis thaliana (Mouse-ear cress), this protein is Berberine bridge enzyme-like 19.